A 184-amino-acid polypeptide reads, in one-letter code: UPF0398 protein BCG9842_B3730 (184 aa).

It belongs to the UPF0398 family.

This Bacillus cereus (strain G9842) protein is UPF0398 protein BCG9842_B3730.